The chain runs to 337 residues: MKLSRLALLSVFALASAPSWAESVVTVYSIDGLHDGDNSWYQVQFDAFTKATGITVRYVEGGGGVVVERLAKERTNPQADVLVTAPPFIQRAAAEKLLANFNTDAASAIPDANNLYSPLVKNYLSFIYNSKLLKTAPASWQDLLDGKFKNKLQYSTPGQAADGTAVMLQAFHSFGSKDAGFAYLGKLQANNVGPSASTGKLTALVNKGEIYVANGDLQMNLAQMERNPNVKIFWPANDKGERSALAIPYVIGLVQGAPQSENGKKLINFLLSKEAQTRVSELSWGMPVRSDVTPSDEHYKAATAALEGVQSWQPNWDDVAVSLSADISRWHKVTESE.

Positions methionine 1–alanine 21 are cleaved as a signal peptide.

The protein belongs to the bacterial solute-binding protein 1 family.

The protein localises to the periplasm. Its function is as follows. Probably part of the PhnSTUV complex (TC 3.A.1.11.5) involved in 2-aminoethylphosphonate import. The protein is Putative 2-aminoethylphosphonate-binding periplasmic protein (phnS) of Salmonella paratyphi A (strain ATCC 9150 / SARB42).